Here is a 356-residue protein sequence, read N- to C-terminus: Histidinol-phosphate aminotransferase (356 aa).

Lys210 carries the post-translational modification N6-(pyridoxal phosphate)lysine.

Belongs to the class-II pyridoxal-phosphate-dependent aminotransferase family. Histidinol-phosphate aminotransferase subfamily. In terms of assembly, homodimer. Requires pyridoxal 5'-phosphate as cofactor.

It catalyses the reaction L-histidinol phosphate + 2-oxoglutarate = 3-(imidazol-4-yl)-2-oxopropyl phosphate + L-glutamate. Its pathway is amino-acid biosynthesis; L-histidine biosynthesis; L-histidine from 5-phospho-alpha-D-ribose 1-diphosphate: step 7/9. The chain is Histidinol-phosphate aminotransferase (hisC) from Acetobacter pasteurianus (Acetobacter turbidans).